Here is a 172-residue protein sequence, read N- to C-terminus: Type II secretion system protein H (172 aa).

The propeptide at 1 to 6 (MRASRG) is leader sequence. N-methylphenylalanine is present on Phe7. Residues 7–27 (FTLIELMVVMVIISVLIGLAV) traverse the membrane as a helical segment.

This sequence belongs to the GSP H family. Type II secretion is composed of four main components: the outer membrane complex, the inner membrane complex, the cytoplasmic secretion ATPase and the periplasm-spanning pseudopilus. Forms the tip of the type II pseudopilus by interacting with XcpV, XcpW and XcpX. Interacts with core component XcpT. Cleaved by prepilin peptidase. In terms of processing, methylated by prepilin peptidase at the amino group of the N-terminal phenylalanine once the leader sequence is cleaved by prepilin peptidase.

It localises to the cell inner membrane. Functionally, component of the type II secretion system required for the energy-dependent secretion of extracellular factors such as proteases and toxins from the periplasm. Part of the pseudopilus tip complex that is critical for the recognition and binding of secretion substrates. Type II pseudopilus confers increased bacterial adhesive capabilities. The polypeptide is Type II secretion system protein H (xcpU) (Pseudomonas aeruginosa (strain ATCC 15692 / DSM 22644 / CIP 104116 / JCM 14847 / LMG 12228 / 1C / PRS 101 / PAO1)).